The chain runs to 151 residues: MHAGKRSPLTQSISCVCLPELGALWEIESARVNLRVSGREASREMESSPRPHRIAGVKRFLKHAGKWSLRWFLSPRWILQFRRWARKWSRFTRSSFQVRWAAVPAGKCSQHQGLSAVATASPGVFWEMEFDVSSPLTEGAGSPMSSKHAGE.

This is an uncharacterized protein from Homo sapiens (Human).